We begin with the raw amino-acid sequence, 369 residues long: Ribosomal RNA large subunit methyltransferase G (369 aa).

The protein belongs to the methyltransferase superfamily. RlmG family.

It localises to the cytoplasm. The enzyme catalyses guanosine(1835) in 23S rRNA + S-adenosyl-L-methionine = N(2)-methylguanosine(1835) in 23S rRNA + S-adenosyl-L-homocysteine + H(+). Its function is as follows. Specifically methylates the guanine in position 1835 (m2G1835) of 23S rRNA. This is Ribosomal RNA large subunit methyltransferase G from Magnetococcus marinus (strain ATCC BAA-1437 / JCM 17883 / MC-1).